A 92-amino-acid polypeptide reads, in one-letter code: MVKNSFISIISQEQEEKEENKGSVEFQVFSFTNKIRRLTSHLGLHKKDFSSQRGLRIILGKRQRLLAYLSKKNRVRYKKLIGQLDIREPKTR.

Belongs to the universal ribosomal protein uS15 family. As to quaternary structure, part of the 30S ribosomal subunit.

It is found in the plastid. It localises to the chloroplast. This is Small ribosomal subunit protein uS15c (rps15-A) from Lemna minor (Common duckweed).